Here is a 123-residue protein sequence, read N- to C-terminus: Large ribosomal subunit protein bL12 (123 aa).

The protein belongs to the bacterial ribosomal protein bL12 family. As to quaternary structure, homodimer. Part of the ribosomal stalk of the 50S ribosomal subunit. Forms a multimeric L10(L12)X complex, where L10 forms an elongated spine to which 2 to 4 L12 dimers bind in a sequential fashion. Binds GTP-bound translation factors.

In terms of biological role, forms part of the ribosomal stalk which helps the ribosome interact with GTP-bound translation factors. Is thus essential for accurate translation. This chain is Large ribosomal subunit protein bL12, found in Neisseria perflava.